Consider the following 287-residue polypeptide: MTAPAKQIVIITGMSGSGKSTAIRALEDSGFFCIDNLPVLLLPKLTELAGGGHFERMALVVDVREGVFLKDAPRILAEVRRAGHQVEVLFLDASDDSLIRRFSETRRRHPLAPNGTVAEGIKAERQALRDLRELADQVIDSSTLNVHDLKRMVQARFSPEPAAGPSLSIMSFGYRYGVPPQADLVLDVRFLPNPYFVPEMKGLTGKVPKVAAYVLEREETQQFLEKVVDLCRFLFPRYQKEGKAYLTVALGCTGGKHRSVAIAAELTQRLTDEDTRVQLWDRDIEKE.

13–20 contacts ATP; it reads GMSGSGKS. GTP is bound at residue 62 to 65; that stretch reads DVRE.

This sequence belongs to the RapZ-like family.

In terms of biological role, displays ATPase and GTPase activities. The chain is Nucleotide-binding protein MXAN_6564 from Myxococcus xanthus (strain DK1622).